The primary structure comprises 164 residues: 3-isopropylmalate dehydratase small subunit 1 (164 aa).

Belongs to the LeuD family. LeuD type 2 subfamily. Heterodimer of LeuC and LeuD.

It catalyses the reaction (2R,3S)-3-isopropylmalate = (2S)-2-isopropylmalate. It functions in the pathway amino-acid biosynthesis; L-leucine biosynthesis; L-leucine from 3-methyl-2-oxobutanoate: step 2/4. In terms of biological role, catalyzes the isomerization between 2-isopropylmalate and 3-isopropylmalate, via the formation of 2-isopropylmaleate. This is 3-isopropylmalate dehydratase small subunit 1 (leuD1) from Pyrococcus abyssi (strain GE5 / Orsay).